The following is a 321-amino-acid chain: F-box protein At4g35930 (321 aa).

The span at 1–13 (MGKVSPKDLDSKT) shows a compositional bias: basic and acidic residues. Residues 1-23 (MGKVSPKDLDSKTSVRKKKLKSS) form a disordered region. An F-box domain is found at 159–207 (ESQLESLPMDLLVKIVCHLHHDQLKAVFHVSQRIRMATILARQYHFNYT). Positions 228 to 258 (WPFRRGDGNPTMVSSPHTPKAPKHAPRPPSR) are disordered.

The protein is F-box protein At4g35930 of Arabidopsis thaliana (Mouse-ear cress).